A 220-amino-acid polypeptide reads, in one-letter code: Deoxyribose-phosphate aldolase (220 aa).

Asp-89 (proton donor/acceptor) is an active-site residue. Lys-151 acts as the Schiff-base intermediate with acetaldehyde in catalysis. Residue Lys-180 is the Proton donor/acceptor of the active site.

It belongs to the DeoC/FbaB aldolase family. DeoC type 1 subfamily.

Its subcellular location is the cytoplasm. The catalysed reaction is 2-deoxy-D-ribose 5-phosphate = D-glyceraldehyde 3-phosphate + acetaldehyde. The protein operates within carbohydrate degradation; 2-deoxy-D-ribose 1-phosphate degradation; D-glyceraldehyde 3-phosphate and acetaldehyde from 2-deoxy-alpha-D-ribose 1-phosphate: step 2/2. In terms of biological role, catalyzes a reversible aldol reaction between acetaldehyde and D-glyceraldehyde 3-phosphate to generate 2-deoxy-D-ribose 5-phosphate. This is Deoxyribose-phosphate aldolase from Staphylococcus saprophyticus subsp. saprophyticus (strain ATCC 15305 / DSM 20229 / NCIMB 8711 / NCTC 7292 / S-41).